The sequence spans 769 residues: Neprilysin-21 (769 aa).

The Cytoplasmic portion of the chain corresponds to 1 to 26; sequence MKPENGAATWHPAKRSCLGRLTTLET. Residues 27–47 form a helical; Signal-anchor for type II membrane protein membrane-spanning segment; sequence LLLVFLGLLITALLSVLFLWL. The Extracellular portion of the chain corresponds to 48–769; it reads WVLDGYKTFT…MNPERKCQVW (722 aa). N-linked (GlcNAc...) asparagine glycosylation occurs at Asn69. Positions 85–769 constitute a Peptidase M13 domain; that stretch reads VCTSRECVRL…MNPERKCQVW (685 aa). Cystine bridges form between Cys86–Cys91, Cys109–Cys754, Cys117–Cys714, Cys173–Cys428, and Cys638–Cys766. Asn221, Asn240, Asn272, Asn307, Asn356, Asn412, and Asn506 each carry an N-linked (GlcNAc...) asparagine glycan. Zn(2+) is bound at residue His601. Glu602 is an active-site residue. The Zn(2+) site is built by His605 and Glu663. Asp667 serves as the catalytic Proton donor. 2 N-linked (GlcNAc...) asparagine glycosylation sites follow: Asn684 and Asn698.

Belongs to the peptidase M13 family. Zn(2+) serves as cofactor.

It is found in the cell membrane. Probable cell surface protease. The sequence is that of Neprilysin-21 (nep-21) from Caenorhabditis elegans.